A 909-amino-acid chain; its full sequence is Protein translocase subunit SecA (909 aa).

ATP-binding positions include Gln87, 105–109 (GEGKT), and Asp512. Residues 863–909 (LVGGGDEDDESIAAHTPMIRDGDKVGRNDPCPCGSGRKYKQCHGKLS) are disordered. A compositionally biased stretch (basic and acidic residues) spans 880-889 (MIRDGDKVGR). Residues Cys893, Cys895, Cys904, and His905 each coordinate Zn(2+). Residues 899-909 (RKYKQCHGKLS) show a composition bias toward basic residues.

Belongs to the SecA family. In terms of assembly, monomer and homodimer. Part of the essential Sec protein translocation apparatus which comprises SecA, SecYEG and auxiliary proteins SecDF-YajC and YidC. It depends on Zn(2+) as a cofactor.

The protein localises to the cell inner membrane. It localises to the cytoplasm. The catalysed reaction is ATP + H2O + cellular proteinSide 1 = ADP + phosphate + cellular proteinSide 2.. Functionally, part of the Sec protein translocase complex. Interacts with the SecYEG preprotein conducting channel. Has a central role in coupling the hydrolysis of ATP to the transfer of proteins into and across the cell membrane, serving both as a receptor for the preprotein-SecB complex and as an ATP-driven molecular motor driving the stepwise translocation of polypeptide chains across the membrane. The protein is Protein translocase subunit SecA of Shewanella putrefaciens (strain CN-32 / ATCC BAA-453).